The chain runs to 474 residues: Adenylyl cyclase-associated protein 1 (474 aa).

The residue at position 2 (Ala2) is an N-acetylalanine. Tyr31 carries the post-translational modification Phosphotyrosine. Ser34 carries the post-translational modification Phosphoserine. An N6-acetyllysine modification is found at Lys80. Disordered regions lie at residues 215 to 253 (ELSGLPSGPSVGSGPPPPPPGPPPPPISTSSGSDDSASR) and 277 to 316 (MKTHKNPALKAQSGPVRSGPKPFSAPKPQTSPSPKPATKK). Residues 217–227 (SGLPSGPSVGS) show a composition bias toward low complexity. Pro residues predominate over residues 228–241 (GPPPPPPGPPPPPI). Lys286 bears the N6-methyllysine mark. Phosphoserine occurs at positions 289, 294, and 300. Residues 299–311 (FSAPKPQTSPSPK) show a composition bias toward pro residues. Thr306 carries the phosphothreonine modification. Phosphoserine occurs at positions 307 and 309. In terms of domain architecture, C-CAP/cofactor C-like spans 312-452 (PATKKEPALL…EGGDFNEFPV (141 aa)). Residue Lys347 forms a Glycyl lysine isopeptide (Lys-Gly) (interchain with G-Cter in SUMO1) linkage.

This sequence belongs to the CAP family. In terms of assembly, homodimer. Binds actin monomers. In terms of tissue distribution, ubiquitous.

Its subcellular location is the cell membrane. Its function is as follows. Directly regulates filament dynamics and has been implicated in a number of complex developmental and morphological processes, including mRNA localization and the establishment of cell polarity. The protein is Adenylyl cyclase-associated protein 1 (Cap1) of Mus musculus (Mouse).